The sequence spans 662 residues: Polyunsaturated fatty acid lipoxygenase ALOX15 (662 aa).

Residues 2–114 (GLYRIRVSTG…VLSLPEGTGR (113 aa)) enclose the PLAT domain. Residues 115 to 662 (TVGEDPQGLF…PSVVENSVAI (548 aa)) form the Lipoxygenase domain. The Fe cation site is built by H360, H365, H540, H544, and I662.

It belongs to the lipoxygenase family. As to quaternary structure, interacts with PEBP1; in response to IL13/interleukin-13, prevents the interaction of PEBP1 with RAF1 to activate the ERK signaling cascade. Requires Fe cation as cofactor. Detected in monocytes and eosinophils (at protein level). Expressed in airway epithelial cells.

It localises to the cytoplasm. The protein localises to the cytosol. Its subcellular location is the cell membrane. The protein resides in the lipid droplet. It carries out the reaction (5Z,8Z,11Z,14Z)-eicosatetraenoate + O2 = (12S)-hydroperoxy-(5Z,8Z,10E,14Z)-eicosatetraenoate. The catalysed reaction is (5Z,8Z,11Z,14Z)-eicosatetraenoate + O2 = (15S)-hydroperoxy-(5Z,8Z,11Z,13E)-eicosatetraenoate. It catalyses the reaction (9Z,12Z)-octadecadienoate + O2 = (13S)-hydroperoxy-(9Z,11E)-octadecadienoate. The enzyme catalyses (5Z,8Z,11Z,14Z)-eicosatetraenoate + 2 O2 = (14R,15S)-dihydroperoxy-(5Z,8Z,10E,12E)-eicosatetraenoate. It carries out the reaction (5Z,8Z,11Z,14Z)-eicosatetraenoate + 2 O2 = (8S,15S)-dihydroperoxy-(5Z,9E,11Z,13E)-eicosatetraenoate. The catalysed reaction is (14S,15R)-epoxy-(5Z,8Z,11Z)-eicosatrienoate + O2 = (8S)-hydroperoxy-(14S,15R)-epoxy-(5Z,9E,11Z)-eicosatrienoate. It catalyses the reaction (14S,15R)-epoxy-(5Z,8Z,11Z)-eicosatrienoate + O2 = (12S)-hydroperoxy-(14S,15R)-epoxy-(5Z,8Z,10E)-eicosatrienoate. The enzyme catalyses (14R,15S)-epoxy-(5Z,8Z,11Z)-eicosatrienoate + O2 = (5S)-hydroperoxy-(14R,15S)-epoxy-(6E,8Z,11Z)-eicosatrienoate. It carries out the reaction (14R,15S)-epoxy-(5Z,8Z,11Z)-eicosatrienoate + O2 = (12S)-hydroperoxy-(14R,15S)-epoxy-(5Z,8Z,10E)-eicosatrienoate. The catalysed reaction is (15R)-hydroperoxy-(5Z,8Z,11Z,13E)-eicosatetraenoate = 15-oxo-(5Z,8Z,11Z,13E)-eicosatetraenoate + H2O. It catalyses the reaction (15S)-hydroperoxy-(5Z,8Z,11Z,13E)-eicosatetraenoate = (14S,15S)-epoxy-(5Z,8Z,10E,12E)-eicosatetraenoate + H2O. The enzyme catalyses (12S)-hydroperoxy-(5Z,8Z,10E,14Z)-eicosatetraenoate = (8S)-hydroxy-(11S,12S)-epoxy-(5Z,9E,14Z)-eicosatrienoate. It carries out the reaction (4Z,7Z,10Z,13Z,16Z,19Z)-docosahexaenoate + O2 = (14S)-hydroperoxy-(4Z,7Z,10Z,12E,16Z,19Z)-docosahexaenoate. The catalysed reaction is (4Z,7Z,10Z,13Z,16Z,19Z)-docosahexaenoate + O2 = (17S)-hydroperoxy-(4Z,7Z,10Z,13Z,15E,19Z)-docosahexaenoate. It catalyses the reaction (7S)-hydroperoxy-(4Z,8E,10Z,13Z,16Z,19Z)-docosahexaenoate + O2 = (7S,14S)-dihydroperoxy-(4Z,8E,10Z,12E,16Z,19Z)-docosahexaenoate. The enzyme catalyses (7S)-hydroperoxy-(4Z,8E,10Z,13Z,16Z,19Z)-docosahexaenoate + O2 = (7S,17S)-dihydroperoxy-(4Z,8E,10Z,13Z,15E,19Z)-docosahexaenoate. It carries out the reaction (4Z,7Z,10Z,13Z,16Z,19Z)-docosahexaenoate + O2 = (11S)-hydroperoxy-(4Z,7Z,9E,13Z,16Z,19Z)-docosahexaenoate. The catalysed reaction is (7Z,10Z,13Z,16Z,19Z)-docosapentaenoate + O2 = 14-hydroperoxy-(7Z,10Z,12E,16Z,19Z)-docosapentaenoate. It catalyses the reaction (4Z,7Z,10Z,13Z,16Z)-docosapentaenoate + O2 = 14-hydroperoxy-(4Z,7Z,10Z,12E,16Z)-docosapentaenoate. The enzyme catalyses N-(5Z,8Z,11Z,14Z)-eicosatetraenoyl-taurine + O2 = N-(12S)-hydroperoxy-(5Z,8Z,10E,14Z)-eicosatetraenoyl-taurine. It carries out the reaction N-(5Z,8Z,11Z,14Z)-eicosatetraenoyl-gamma-aminobutanoate + O2 = N-(12S)-hydroperoxy-(5Z,8Z,10E,14Z)-eicosatetraenoyl-gamma-aminobutanoate. The catalysed reaction is N-(5Z,8Z,11Z,14Z)-eicosatetraenoyl-glycine + O2 = N-(12S)-hydroperoxy-(5Z,8Z,10E,14Z)-eicosatetraenoyl-glycine. It catalyses the reaction N-(5Z,8Z,11Z,14Z)-eicosatetraenoyl-L-alanine + O2 = N-(12S)-hydroperoxy-(5Z,8Z,10E,14Z)-eicosatetraenoyl-alanine. The enzyme catalyses N-(5Z,8Z,11Z,14Z)-eicosatetraenoyl-taurine + O2 = N-(15S)-hydroperoxy-(5Z,8Z,11Z,13E)-eicosatetraenoyl-taurine. It carries out the reaction N-(5Z,8Z,11Z,14Z)-eicosatetraenoyl-gamma-aminobutanoate + O2 = N-(15S)-hydroperoxy-(5Z,8Z,11Z,13E)-eicosatetraenoyl-gamma-aminobutanoate. The catalysed reaction is N-(5Z,8Z,11Z,14Z)-eicosatetraenoyl-glycine + O2 = N-(15S)-hydroperoxy-(5Z,8Z,11Z,13E)-eicosatetraenoyl-glycine. It catalyses the reaction N-(5Z,8Z,11Z,14Z)-eicosatetraenoyl-L-alanine + O2 = N-(15S)-hydroperoxy-(5Z,8Z,11Z,13E)-eicosatetraenoyl-alanine. The protein operates within lipid metabolism; hydroperoxy eicosatetraenoic acid biosynthesis. With respect to regulation, activity is increased by binding phosphatidylinositol phosphates, especially phosphatidylinositol 3,4-bisphosphate and phosphatidylinositol 4,5-bisphosphate. Inactivated at 37 degrees Celsius by (13S)-hydroperoxy-(9Z,11E)-octadecadienoate. Functionally, non-heme iron-containing dioxygenase that catalyzes the stereo-specific peroxidation of free and esterified polyunsaturated fatty acids generating a spectrum of bioactive lipid mediators. It inserts peroxyl groups at C12 or C15 of arachidonate ((5Z,8Z,11Z,14Z)-eicosatetraenoate) producing both 12-hydroperoxyeicosatetraenoate/12-HPETE and 15-hydroperoxyeicosatetraenoate/15-HPETE. It may then act on 12-HPETE to produce hepoxilins, which may show pro-inflammatory properties. Can also peroxidize linoleate ((9Z,12Z)-octadecadienoate) to 13-hydroperoxyoctadecadienoate/13-HPODE. May participate in the sequential oxidations of DHA ((4Z,7Z,10Z,13Z,16Z,19Z)-docosahexaenoate) to generate specialized pro-resolving mediators (SPMs)like resolvin D5 ((7S,17S)-diHPDHA) and (7S,14S)-diHPDHA, that actively down-regulate the immune response and have anti-aggregation properties with platelets. Can convert epoxy fatty acids to hydroperoxy-epoxides derivatives followed by an intramolecular nucleophilic substitution leading to the formation of monocyclic endoperoxides. Plays an important role during the maintenance of self-tolerance by peroxidizing membrane-bound phosphatidylethanolamine which can then signal the sorting process for clearance of apoptotic cells during inflammation and prevent an autoimmune response. In addition to its role in the immune and inflammatory responses, this enzyme may play a role in epithelial wound healing in the cornea through production of lipoxin A4 (LXA(4)) and docosahexaenoic acid-derived neuroprotectin D1 (NPD1; 10R,17S-HDHA), both lipid autacoids exhibit anti-inflammatory and neuroprotective properties. Furthermore, it may regulate actin polymerization which is crucial for several biological processes such as the phagocytosis of apoptotic cells. It is also implicated in the generation of endogenous ligands for peroxisome proliferator activated receptor (PPAR-gamma), hence modulating macrophage development and function. It may also exert a negative effect on skeletal development by regulating bone mass through this pathway. As well as participates in ER stress and downstream inflammation in adipocytes, pancreatic islets, and liver. Finally, it is also involved in the cellular response to IL13/interleukin-13. The chain is Polyunsaturated fatty acid lipoxygenase ALOX15 from Homo sapiens (Human).